We begin with the raw amino-acid sequence, 782 residues long: LPS-assembly protein LptD (782 aa).

The signal sequence occupies residues 1–24; sequence MKKNSYTRLSIAILSTLYSVSSLA.

It belongs to the LptD family. In terms of assembly, component of the lipopolysaccharide transport and assembly complex. Interacts with LptE and LptA.

The protein localises to the cell outer membrane. Its function is as follows. Together with LptE, is involved in the assembly of lipopolysaccharide (LPS) at the surface of the outer membrane. This is LPS-assembly protein LptD from Pasteurella multocida (strain Pm70).